Reading from the N-terminus, the 33-residue chain is Cytochrome b6-f complex subunit 8 (33 aa).

A helical membrane pass occupies residues 2-22; it reads LFTLGWASLAAMFSFSIAMVV.

It belongs to the PetN family. In terms of assembly, the 4 large subunits of the cytochrome b6-f complex are cytochrome b6, subunit IV (17 kDa polypeptide, PetD), cytochrome f and the Rieske protein, while the 4 small subunits are PetG, PetL, PetM and PetN. The complex functions as a dimer.

It is found in the cellular thylakoid membrane. In terms of biological role, component of the cytochrome b6-f complex, which mediates electron transfer between photosystem II (PSII) and photosystem I (PSI), cyclic electron flow around PSI, and state transitions. The chain is Cytochrome b6-f complex subunit 8 from Synechococcus sp. (strain CC9605).